The sequence spans 494 residues: UPF0371 protein SP70585_0405 (494 aa).

This sequence belongs to the UPF0371 family.

This chain is UPF0371 protein SP70585_0405, found in Streptococcus pneumoniae (strain 70585).